Consider the following 163-residue polypeptide: uncharacterized protein (163 aa).

Positions 136–161 form a coiled coil; it reads QKYIENHQKEINEHVEKLRTLHKELR.

This is an uncharacterized protein from Acanthamoeba polyphaga (Amoeba).